A 224-amino-acid chain; its full sequence is UPF0758 protein VS_0182 (224 aa).

Positions 1-21 are disordered; it reads MPISKMPVESMPREKLLSRGP. Residues 102–224 form the MPN domain; it reads ALTSPSHTKL…VISFAERGWI (123 aa). Positions 173, 175, and 186 each coordinate Zn(2+). Positions 173-186 match the JAMM motif motif; sequence HNHPSGVAEPSQAD.

It belongs to the UPF0758 family.

The protein is UPF0758 protein VS_0182 of Vibrio atlanticus (strain LGP32) (Vibrio splendidus (strain Mel32)).